The chain runs to 254 residues: Large ribosomal subunit protein uL2B (254 aa).

K46 is covalently cross-linked (Glycyl lysine isopeptide (Lys-Gly) (interchain with G-Cter in ubiquitin)). S52 carries the phosphoserine modification. K93 is covalently cross-linked (Glycyl lysine isopeptide (Lys-Gly) (interchain with G-Cter in ubiquitin)). S95 is subject to Phosphoserine. Glycyl lysine isopeptide (Lys-Gly) (interchain with G-Cter in ubiquitin) cross-links involve residues K119 and K145. S159, S160, and S249 each carry phosphoserine.

The protein belongs to the universal ribosomal protein uL2 family. In terms of assembly, component of the large ribosomal subunit (LSU). Mature yeast ribosomes consist of a small (40S) and a large (60S) subunit. The 40S small subunit contains 1 molecule of ribosomal RNA (18S rRNA) and 33 different proteins (encoded by 57 genes). The large 60S subunit contains 3 rRNA molecules (25S, 5.8S and 5S rRNA) and 46 different proteins (encoded by 81 genes).

The protein resides in the cytoplasm. Component of the ribosome, a large ribonucleoprotein complex responsible for the synthesis of proteins in the cell. The small ribosomal subunit (SSU) binds messenger RNAs (mRNAs) and translates the encoded message by selecting cognate aminoacyl-transfer RNA (tRNA) molecules. The large subunit (LSU) contains the ribosomal catalytic site termed the peptidyl transferase center (PTC), which catalyzes the formation of peptide bonds, thereby polymerizing the amino acids delivered by tRNAs into a polypeptide chain. The nascent polypeptides leave the ribosome through a tunnel in the LSU and interact with protein factors that function in enzymatic processing, targeting, and the membrane insertion of nascent chains at the exit of the ribosomal tunnel. The sequence is that of Large ribosomal subunit protein uL2B from Saccharomyces cerevisiae (strain ATCC 204508 / S288c) (Baker's yeast).